The chain runs to 98 residues: MSLIHINVFLAFTTSLMGLLMYRSHLMSSLLCLEGMMLSLFIMATMMVLNSHFTLASMMPIILLVFAACEAALGLSLLVMISNTYGTDYVQNLNLLQC.

3 helical membrane-spanning segments follow: residues 1-21, 29-49, and 61-81; these read MSLI…GLLM, SLLC…MMVL, and IILL…LVMI.

This sequence belongs to the complex I subunit 4L family. In terms of assembly, core subunit of respiratory chain NADH dehydrogenase (Complex I) which is composed of 45 different subunits.

It localises to the mitochondrion inner membrane. The catalysed reaction is a ubiquinone + NADH + 5 H(+)(in) = a ubiquinol + NAD(+) + 4 H(+)(out). Functionally, core subunit of the mitochondrial membrane respiratory chain NADH dehydrogenase (Complex I) which catalyzes electron transfer from NADH through the respiratory chain, using ubiquinone as an electron acceptor. Part of the enzyme membrane arm which is embedded in the lipid bilayer and involved in proton translocation. In Ceratotherium simum (White rhinoceros), this protein is NADH-ubiquinone oxidoreductase chain 4L (MT-ND4L).